The chain runs to 214 residues: CASP-like protein 0U1 (214 aa).

The Cytoplasmic portion of the chain corresponds to 1–82 (MATSEAPLLK…GFTSFYQFKG (82 aa)). The chain crosses the membrane as a helical span at residues 83–103 (VVGVYAAFWVYTVLLIGLYLF). The Extracellular portion of the chain corresponds to 104 to 112 (SRGPPPGTE). Residues 113 to 133 (FVVHALFTLCMIAFVSLSVIS) form a helical membrane-spanning segment. Residues 134 to 153 (CTSTVIESDYSVCKNAAYAK) are Cytoplasmic-facing. A helical transmembrane segment spans residues 154-174 (ASLVFAALVVVLNCATCAFVF). Residues 175–214 (KQWRSLQFVGMPENFRPFGRHRHKHGHHAGDADDAIPTHP) are Extracellular-facing. The tract at residues 194-214 (RHRHKHGHHAGDADDAIPTHP) is disordered.

Belongs to the Casparian strip membrane proteins (CASP) family. As to quaternary structure, homodimer and heterodimers.

It localises to the cell membrane. This chain is CASP-like protein 0U1, found in Ostreococcus tauri.